The following is a 336-amino-acid chain: Ketol-acid reductoisomerase (NADP(+)) (336 aa).

The KARI N-terminal Rossmann domain maps to 3-183 (ATMYYDRDVS…GGTRAGVLET (181 aa)). NADP(+)-binding positions include 26-29 (YGSQ), Arg-49, Ser-52, Ser-54, and 84-87 (DETQ). Residue His-109 is part of the active site. Gly-135 is an NADP(+) binding site. The region spanning 184–329 (TFKEETETDL…RELRSKMPFI (146 aa)) is the KARI C-terminal knotted domain. 4 residues coordinate Mg(2+): Asp-192, Glu-196, Glu-228, and Glu-232. Residue Ser-253 coordinates substrate.

It belongs to the ketol-acid reductoisomerase family. Mg(2+) is required as a cofactor.

The catalysed reaction is (2R)-2,3-dihydroxy-3-methylbutanoate + NADP(+) = (2S)-2-acetolactate + NADPH + H(+). It carries out the reaction (2R,3R)-2,3-dihydroxy-3-methylpentanoate + NADP(+) = (S)-2-ethyl-2-hydroxy-3-oxobutanoate + NADPH + H(+). Its pathway is amino-acid biosynthesis; L-isoleucine biosynthesis; L-isoleucine from 2-oxobutanoate: step 2/4. It functions in the pathway amino-acid biosynthesis; L-valine biosynthesis; L-valine from pyruvate: step 2/4. In terms of biological role, involved in the biosynthesis of branched-chain amino acids (BCAA). Catalyzes an alkyl-migration followed by a ketol-acid reduction of (S)-2-acetolactate (S2AL) to yield (R)-2,3-dihydroxy-isovalerate. In the isomerase reaction, S2AL is rearranged via a Mg-dependent methyl migration to produce 3-hydroxy-3-methyl-2-ketobutyrate (HMKB). In the reductase reaction, this 2-ketoacid undergoes a metal-dependent reduction by NADPH to yield (R)-2,3-dihydroxy-isovalerate. The sequence is that of Ketol-acid reductoisomerase (NADP(+)) from Deinococcus geothermalis (strain DSM 11300 / CIP 105573 / AG-3a).